The chain runs to 147 residues: MDTLTAIGRWLAKQHVVTWCVHHEGELWCANAFYLFDAQNVALYLLTDDKTRHAQMSGACAPVAGTVNGQPKTVTRIRGVQFKGVIRRLEGQESDAARKAYLRRFPVARVLPAPVWEIRLDEIKFTDNTLGFGKKLHWLRDSRAQQA.

The protein belongs to the UPF0306 family.

The polypeptide is UPF0306 protein YhbP (Salmonella schwarzengrund (strain CVM19633)).